The primary structure comprises 524 residues: Putative mediator of RNA polymerase II transcription subunit 8 (524 aa).

2 coiled-coil regions span residues 117–146 (LKLH…SKHK) and 175–211 (NAQQ…QQQQ). Disordered regions lie at residues 312–340 (VASP…QPSI), 356–379 (LPNT…IGGG), and 430–451 (QQNQ…IQHL). Positions 314-333 (SPQQQVTSKQVPIQSTNKPL) are enriched in polar residues. A compositionally biased stretch (low complexity) spans 356–374 (LPNTTSPPVNNNNQSPINS). Positions 398–478 (IQQQIQLQQQ…LQQQFQQQQL (81 aa)) form a coiled coil.

The protein belongs to the Mediator complex subunit 8 family. As to quaternary structure, component of the Mediator complex. May be part of a multisubunit E3 ubiquitin-protein ligase complex.

It localises to the nucleus. It functions in the pathway protein modification; protein ubiquitination. Its function is as follows. Component of the Mediator complex, a coactivator involved in the regulated transcription of nearly all RNA polymerase II-dependent genes. Mediator functions as a bridge to convey information from gene-specific regulatory proteins to the basal RNA polymerase II transcription machinery. Mediator is recruited to promoters by direct interactions with regulatory proteins and serves as a scaffold for the assembly of a functional preinitiation complex with RNA polymerase II and the general transcription factors. May play a role as a target recruitment subunit in E3 ubiquitin-protein ligase complexes and thus in ubiquitination and subsequent proteasomal degradation of target proteins. This Dictyostelium discoideum (Social amoeba) protein is Putative mediator of RNA polymerase II transcription subunit 8 (med8).